The chain runs to 505 residues: Glycerol kinase (505 aa).

Thr14 is a binding site for ADP. ATP contacts are provided by Thr14, Thr15, and Ser16. Thr14 contributes to the sn-glycerol 3-phosphate binding site. Arg18 contributes to the ADP binding site. The sn-glycerol 3-phosphate site is built by Arg84, Glu85, Tyr136, and Asp246. Arg84, Glu85, Tyr136, Asp246, and Gln247 together coordinate glycerol. Thr268 and Gly311 together coordinate ADP. The ATP site is built by Thr268, Gly311, Gln315, and Gly412. ADP is bound by residues Gly412 and Asn416.

It belongs to the FGGY kinase family.

The catalysed reaction is glycerol + ATP = sn-glycerol 3-phosphate + ADP + H(+). The protein operates within polyol metabolism; glycerol degradation via glycerol kinase pathway; sn-glycerol 3-phosphate from glycerol: step 1/1. Its activity is regulated as follows. Inhibited by fructose 1,6-bisphosphate (FBP). Its function is as follows. Key enzyme in the regulation of glycerol uptake and metabolism. Catalyzes the phosphorylation of glycerol to yield sn-glycerol 3-phosphate. The protein is Glycerol kinase of Vibrio vulnificus (strain CMCP6).